We begin with the raw amino-acid sequence, 98 residues long: Large ribosomal subunit protein uL23 (98 aa).

Belongs to the universal ribosomal protein uL23 family. As to quaternary structure, part of the 50S ribosomal subunit. Contacts protein L29, and trigger factor when it is bound to the ribosome.

Functionally, one of the early assembly proteins it binds 23S rRNA. One of the proteins that surrounds the polypeptide exit tunnel on the outside of the ribosome. Forms the main docking site for trigger factor binding to the ribosome. The sequence is that of Large ribosomal subunit protein uL23 from Chromohalobacter salexigens (strain ATCC BAA-138 / DSM 3043 / CIP 106854 / NCIMB 13768 / 1H11).